We begin with the raw amino-acid sequence, 1016 residues long: KN motif and ankyrin repeat domain-containing protein 4 (1016 aa).

6 disordered regions span residues 1-26 (MEKI…YPYS), 70-91 (PRNF…QQNW), 235-259 (AEPE…AVQS), 401-485 (LSQE…LPRG), 506-563 (EEGS…SPQD), and 622-755 (AQAP…VSHL). Composition is skewed to polar residues over residues 70-80 (PRNFSLPNSGD) and 246-258 (SHLS…SAVQ). The stretch at 346–409 (SSLKNQVLAL…KLSQERASEA (64 aa)) forms a coiled coil. 2 stretches are compositionally biased toward basic and acidic residues: residues 401 to 414 (LSQE…DRTD) and 445 to 454 (PECRAPRAEK). A compositionally biased stretch (polar residues) spans 460–469 (VQNNHKQSYP). Positions 632-650 (TPAPPPSTPPPPPPPPPEI) are enriched in pro residues. Phosphothreonine is present on T639. Positions 695–708 (TSGEDSSPEDLSDS) are enriched in acidic residues. Basic and acidic residues-rich tracts occupy residues 709–727 (ETEK…DLHP) and 745–755 (TSDRGEEVSHL). 5 ANK repeats span residues 838–868 (SGNT…NVDH), 877–905 (VMIT…NVNI), 910–939 (GGQT…DVNL), 943–973 (DGSS…NSSL), and 977–1007 (AGRT…PGRS).

The protein resides in the cytoplasm. Its function is as follows. May be involved in the control of cytoskeleton formation by regulating actin polymerization. In Mus musculus (Mouse), this protein is KN motif and ankyrin repeat domain-containing protein 4 (Kank4).